A 122-amino-acid polypeptide reads, in one-letter code: Selenoprotein H (122 aa).

Lys20 is modified (N6-acetyllysine). A cross-link (cysteinyl-selenocysteine (Cys-Sec); redox-active) is located at residues 41–44 (CTSU). A non-standard amino acid (selenocysteine) is located at residue Sec44.

This sequence belongs to the SelWTH family.

Its function is as follows. May be involved in a redox-related process. The polypeptide is Selenoprotein H (Homo sapiens (Human)).